Reading from the N-terminus, the 224-residue chain is Germin-like protein 8-12 (224 aa).

The signal sequence occupies residues 1 to 23; sequence MASSSLFLLGALLVLASWQAIVA. Cysteines 33 and 48 form a disulfide. Positions 60–213 constitute a Cupin type-1 domain; that stretch reads FNAAKFDMPR…AFQVEKKLID (154 aa). Asn-78 carries an N-linked (GlcNAc...) asparagine glycan. Mn(2+) contacts are provided by His-111, His-113, Glu-118, and His-158.

The protein belongs to the germin family. Oligomer (believed to be a pentamer but probably hexamer).

It is found in the secreted. The protein localises to the extracellular space. Its subcellular location is the apoplast. Its function is as follows. Plays a role in broad-spectrum disease resistance. Probably has no oxalate oxidase activity even if the active site is conserved. The polypeptide is Germin-like protein 8-12 (Oryza sativa subsp. japonica (Rice)).